Reading from the N-terminus, the 620-residue chain is Chaperone protein HscA homolog (620 aa).

The protein belongs to the heat shock protein 70 family.

In terms of biological role, chaperone involved in the maturation of iron-sulfur cluster-containing proteins. Has a low intrinsic ATPase activity which is markedly stimulated by HscB. In Pseudomonas entomophila (strain L48), this protein is Chaperone protein HscA homolog.